The chain runs to 316 residues: Protoheme IX farnesyltransferase (316 aa).

The next 9 membrane-spanning stretches (helical) occupy residues 32–52 (VMSL…GHIN), 53–73 (PVLG…SGAL), 93–113 (IPAG…LSGF), 116–136 (VILG…TIFF), 152–172 (NIVI…ACVT), 180–200 (TVLF…LALF), 221–241 (VTKH…VLPS), 252–271 (LVAA…VWRM), and 289–309 (IFYL…AILV).

The protein belongs to the UbiA prenyltransferase family. Protoheme IX farnesyltransferase subfamily.

It localises to the cell inner membrane. The enzyme catalyses heme b + (2E,6E)-farnesyl diphosphate + H2O = Fe(II)-heme o + diphosphate. Its pathway is porphyrin-containing compound metabolism; heme O biosynthesis; heme O from protoheme: step 1/1. Converts heme B (protoheme IX) to heme O by substitution of the vinyl group on carbon 2 of heme B porphyrin ring with a hydroxyethyl farnesyl side group. The sequence is that of Protoheme IX farnesyltransferase from Rhizobium etli (strain ATCC 51251 / DSM 11541 / JCM 21823 / NBRC 15573 / CFN 42).